The chain runs to 259 residues: tRNA-cytidine(32) 2-sulfurtransferase (259 aa).

Positions 40-45 (SGGKDS) match the PP-loop motif motif. Residues Cys-114, Cys-117, and Cys-205 each contribute to the [4Fe-4S] cluster site.

It belongs to the TtcA family. As to quaternary structure, homodimer. The cofactor is Mg(2+). It depends on [4Fe-4S] cluster as a cofactor.

Its subcellular location is the cytoplasm. The catalysed reaction is cytidine(32) in tRNA + S-sulfanyl-L-cysteinyl-[cysteine desulfurase] + AH2 + ATP = 2-thiocytidine(32) in tRNA + L-cysteinyl-[cysteine desulfurase] + A + AMP + diphosphate + H(+). It participates in tRNA modification. Catalyzes the ATP-dependent 2-thiolation of cytidine in position 32 of tRNA, to form 2-thiocytidine (s(2)C32). The sulfur atoms are provided by the cysteine/cysteine desulfurase (IscS) system. The sequence is that of tRNA-cytidine(32) 2-sulfurtransferase from Bdellovibrio bacteriovorus (strain ATCC 15356 / DSM 50701 / NCIMB 9529 / HD100).